Here is a 91-residue protein sequence, read N- to C-terminus: RNA-binding protein Hfq (91 aa).

In terms of domain architecture, Sm spans 9–68 (DPYLNALRRERIPVSIYLVNGIKLQGQIESFDQFVILLKNTVNQMVYKHAISTVVPARSV). The disordered stretch occupies residues 69-91 (SHHNNNHHTAPTEAVENVETQAE).

It belongs to the Hfq family. As to quaternary structure, homohexamer.

Its function is as follows. RNA chaperone that binds small regulatory RNA (sRNAs) and mRNAs to facilitate mRNA translational regulation in response to envelope stress, environmental stress and changes in metabolite concentrations. Also binds with high specificity to tRNAs. In Haemophilus influenzae (strain ATCC 51907 / DSM 11121 / KW20 / Rd), this protein is RNA-binding protein Hfq.